The primary structure comprises 947 residues: Probable outer membrane protein pmp19 (947 aa).

An N-terminal signal peptide occupies residues 1–19; sequence MKQMRLWGFLFLSSFCQVS. Residues 672–947 enclose the Autotransporter domain; it reads IPLQHLCVFG…NAHAGLSLSF (276 aa).

It belongs to the PMP outer membrane protein family.

It localises to the secreted. It is found in the cell wall. Its subcellular location is the cell outer membrane. The chain is Probable outer membrane protein pmp19 (pmp19) from Chlamydia pneumoniae (Chlamydophila pneumoniae).